The following is a 372-amino-acid chain: MRSVIADSRRLVVKVGSSLVTNDGRGLDHTAIGRWAAQIAALREQGKEVVLVSSGAIAEGMQRLGWTRRPREIDELQAAAAVGQMGLAQVYESRFSEHSIRTAQILLTHADLADRERYLNARSTLLTLLRLGVVPIINENDTVVTDEIKFGDNDTLGALVANLIEGDALIILTDQQGLFTADPRKDPAATLVQQADAGTPELEAMAGGAGSSIGRGGMLTKILAAKRAAHSGANTVIASGREADILARLASGEAIGTQLIARTARMAARKQWMADHLQVRGHVVIDDGAVEKLTEGGKSLLPIGVVGVQGAFARGEVIACLNAAGREVARGLTNYSSAETKLIQRRPSGEIESVLGYMLEPELIHRDNLVLV.

Residue Lys14 coordinates ATP. The substrate site is built by Ser54, Asp141, and Asn153. 173–174 (TD) serves as a coordination point for ATP. In terms of domain architecture, PUA spans 280 to 358 (RGHVVIDDGA…GEIESVLGYM (79 aa)).

Belongs to the glutamate 5-kinase family.

The protein localises to the cytoplasm. It catalyses the reaction L-glutamate + ATP = L-glutamyl 5-phosphate + ADP. The protein operates within amino-acid biosynthesis; L-proline biosynthesis; L-glutamate 5-semialdehyde from L-glutamate: step 1/2. Catalyzes the transfer of a phosphate group to glutamate to form L-glutamate 5-phosphate. This chain is Glutamate 5-kinase, found in Paraburkholderia phymatum (strain DSM 17167 / CIP 108236 / LMG 21445 / STM815) (Burkholderia phymatum).